The primary structure comprises 450 residues: Glucose-6-phosphate isomerase (450 aa).

Glu-291 acts as the Proton donor in catalysis. Catalysis depends on residues His-312 and Lys-426.

It belongs to the GPI family.

The protein resides in the cytoplasm. It carries out the reaction alpha-D-glucose 6-phosphate = beta-D-fructose 6-phosphate. Its pathway is carbohydrate biosynthesis; gluconeogenesis. It functions in the pathway carbohydrate degradation; glycolysis; D-glyceraldehyde 3-phosphate and glycerone phosphate from D-glucose: step 2/4. Its function is as follows. Catalyzes the reversible isomerization of glucose-6-phosphate to fructose-6-phosphate. In Clostridium botulinum (strain Loch Maree / Type A3), this protein is Glucose-6-phosphate isomerase.